A 365-amino-acid polypeptide reads, in one-letter code: Glycerol dehydrogenase (365 aa).

Residues Asp-37, Gly-94, Lys-95, Thr-116, and Ser-119 each coordinate NAD(+). A glycerol-binding site is contributed by Asp-121. Ser-125, Leu-127, and Tyr-131 together coordinate NAD(+). Mn(2+) is bound by residues Asp-171, His-254, and His-271. A glycerol-binding site is contributed by His-254.

This sequence belongs to the iron-containing alcohol dehydrogenase family. Homohexamer. It depends on Mn(2+) as a cofactor.

It carries out the reaction glycerol + NAD(+) = dihydroxyacetone + NADH + H(+). It catalyses the reaction hydroxyacetone + NADH + H(+) = (S)-propane-1,2-diol + NAD(+). It functions in the pathway polyol metabolism; glycerol fermentation; glycerone phosphate from glycerol (oxidative route): step 1/2. With respect to regulation, inhibited by zinc. Catalyzes the NAD-dependent oxidation of glycerol to dihydroxyacetone (glycerone). Allows microorganisms to utilize glycerol as a source of carbon under anaerobic conditions. Exhibits a rather broad substrate specificity since it can also oxidize 1,2-propanediol and 2,3-butanediol and reduce dihydroxyacetone. Cannot use NADP(+) as an electron acceptor for the oxidation of glycerol. This is Glycerol dehydrogenase from Citrobacter freundii.